Consider the following 123-residue polypeptide: Small ribosomal subunit protein uS13 (123 aa).

The interval 89-123 (GRRHRSGLPVRGQRTRTNARTRKGKRKAVAKKKAK) is disordered. A compositionally biased stretch (basic residues) spans 101–123 (QRTRTNARTRKGKRKAVAKKKAK).

The protein belongs to the universal ribosomal protein uS13 family. In terms of assembly, part of the 30S ribosomal subunit. Forms a loose heterodimer with protein S19. Forms two bridges to the 50S subunit in the 70S ribosome.

Located at the top of the head of the 30S subunit, it contacts several helices of the 16S rRNA. In the 70S ribosome it contacts the 23S rRNA (bridge B1a) and protein L5 of the 50S subunit (bridge B1b), connecting the 2 subunits; these bridges are implicated in subunit movement. Contacts the tRNAs in the A and P-sites. This Cutibacterium acnes (strain DSM 16379 / KPA171202) (Propionibacterium acnes) protein is Small ribosomal subunit protein uS13.